The following is an 802-amino-acid chain: Ent-copalyl diphosphate synthase, chloroplastic (802 aa).

The N-terminal 60 residues, 1-60, are a transit peptide targeting the chloroplast; sequence MSLQYHVLNSIPSTTFLSSTKTTISSSFLTISGSPLNVARDKSRSGSIHCSKLRTQEYIN. Lysine 245 contributes to the substrate binding site. Mg(2+) is bound by residues aspartate 377 and aspartate 379. A DXDD motif motif is present at residues 377-380; the sequence is DIDD. Lysine 463 provides a ligand contact to substrate.

Belongs to the terpene synthase family. Tpsc subfamily. Requires Mg(2+) as cofactor. Post-translationally, the N-terminus is blocked. In terms of tissue distribution, expressed in roots, leaves, flowers and also in siliques.

It localises to the plastid. The protein localises to the chloroplast. It catalyses the reaction (2E,6E,10E)-geranylgeranyl diphosphate = ent-copalyl diphosphate. Its pathway is plant hormone biosynthesis; gibberellin biosynthesis. Its activity is regulated as follows. Inhibited by high concentrations of magnesium. In terms of biological role, catalyzes the conversion of geranylgeranyl diphosphate to the gibberellin precursor ent-copalyl diphosphate. In Arabidopsis thaliana (Mouse-ear cress), this protein is Ent-copalyl diphosphate synthase, chloroplastic (GA1).